The chain runs to 384 residues: Outer membrane protein assembly factor BamB (384 aa).

Positions 1-16 are cleaved as a signal peptide; the sequence is MKIRILVLILCALTQG. A lipid anchor (N-palmitoyl cysteine) is attached at C17. C17 is lipidated: S-diacylglycerol cysteine.

Belongs to the BamB family. As to quaternary structure, part of the Bam complex.

It is found in the cell outer membrane. In terms of biological role, part of the outer membrane protein assembly complex, which is involved in assembly and insertion of beta-barrel proteins into the outer membrane. This Legionella pneumophila (strain Paris) protein is Outer membrane protein assembly factor BamB.